The primary structure comprises 159 residues: Transcription elongation factor GreA (159 aa).

Positions Ser-47 to Glu-77 form a coiled coil.

Belongs to the GreA/GreB family.

Necessary for efficient RNA polymerase transcription elongation past template-encoded arresting sites. The arresting sites in DNA have the property of trapping a certain fraction of elongating RNA polymerases that pass through, resulting in locked ternary complexes. Cleavage of the nascent transcript by cleavage factors such as GreA or GreB allows the resumption of elongation from the new 3'terminus. GreA releases sequences of 2 to 3 nucleotides. The sequence is that of Transcription elongation factor GreA from Metamycoplasma arthritidis (strain 158L3-1) (Mycoplasma arthritidis).